The chain runs to 1556 residues: Pentafunctional AROM polypeptide (1556 aa).

Residues 1 to 387 (MFAEGQIQKV…HEQKASSVAD (387 aa)) form a 3-dehydroquinate synthase region. NAD(+)-binding positions include 46-48 (DTN), 84-87 (ETSK), 115-117 (GGV), and Asp120. Arg131 provides a ligand contact to 7-phospho-2-dehydro-3-deoxy-D-arabino-heptonate. 140-141 (TT) is a binding site for NAD(+). The 7-phospho-2-dehydro-3-deoxy-D-arabino-heptonate site is built by Asp147 and Lys153. Residue Lys162 coordinates NAD(+). Position 163 (Asn163) interacts with 7-phospho-2-dehydro-3-deoxy-D-arabino-heptonate. Residues 180-183 (FLET) and Asn191 contribute to the NAD(+) site. Glu195 serves as a coordination point for Zn(2+). Residues 195 to 198 (EVIK) and Lys253 each bind 7-phospho-2-dehydro-3-deoxy-D-arabino-heptonate. Glu263 functions as the Proton acceptor; for 3-dehydroquinate synthase activity in the catalytic mechanism. Residues 267–271 (RNLLN) and His274 each bind 7-phospho-2-dehydro-3-deoxy-D-arabino-heptonate. A Zn(2+)-binding site is contributed by His274. The Proton acceptor; for 3-dehydroquinate synthase activity role is filled by His278. His290 and Lys359 together coordinate 7-phospho-2-dehydro-3-deoxy-D-arabino-heptonate. Residue His290 participates in Zn(2+) binding. Residues 400 to 837 (VGEAPVGDKK…WDVLSGVFNV (438 aa)) form an EPSP synthase region. Cys819 functions as the For EPSP synthase activity in the catalytic mechanism. The shikimate kinase stretch occupies residues 858–1049 (PSIFIVGMRG…HKDQFTSFLS (192 aa)). An ATP-binding site is contributed by 864–871 (GMRGAGKT). Residues 1050 to 1266 (LTFPDVSIAA…AAPGQLSVEE (217 aa)) form a 3-dehydroquinase region. His1171 serves as the catalytic Proton acceptor; for 3-dehydroquinate dehydratase activity. Residue Lys1200 is the Schiff-base intermediate with substrate; for 3-dehydroquinate dehydratase activity of the active site. Residues 1279 to 1556 (KNLSFFIVGT…EVGEKAVLGN (278 aa)) form a shikimate dehydrogenase region.

This sequence in the N-terminal section; belongs to the sugar phosphate cyclases superfamily. Dehydroquinate synthase family. It in the 2nd section; belongs to the EPSP synthase family. In the 3rd section; belongs to the shikimate kinase family. The protein in the 4th section; belongs to the type-I 3-dehydroquinase family. This sequence in the C-terminal section; belongs to the shikimate dehydrogenase family. As to quaternary structure, homodimer. Requires Zn(2+) as cofactor.

The protein localises to the cytoplasm. It carries out the reaction 7-phospho-2-dehydro-3-deoxy-D-arabino-heptonate = 3-dehydroquinate + phosphate. The enzyme catalyses 3-dehydroquinate = 3-dehydroshikimate + H2O. It catalyses the reaction shikimate + NADP(+) = 3-dehydroshikimate + NADPH + H(+). The catalysed reaction is shikimate + ATP = 3-phosphoshikimate + ADP + H(+). It carries out the reaction 3-phosphoshikimate + phosphoenolpyruvate = 5-O-(1-carboxyvinyl)-3-phosphoshikimate + phosphate. It participates in metabolic intermediate biosynthesis; chorismate biosynthesis; chorismate from D-erythrose 4-phosphate and phosphoenolpyruvate: step 2/7. The protein operates within metabolic intermediate biosynthesis; chorismate biosynthesis; chorismate from D-erythrose 4-phosphate and phosphoenolpyruvate: step 3/7. It functions in the pathway metabolic intermediate biosynthesis; chorismate biosynthesis; chorismate from D-erythrose 4-phosphate and phosphoenolpyruvate: step 4/7. Its pathway is metabolic intermediate biosynthesis; chorismate biosynthesis; chorismate from D-erythrose 4-phosphate and phosphoenolpyruvate: step 5/7. It participates in metabolic intermediate biosynthesis; chorismate biosynthesis; chorismate from D-erythrose 4-phosphate and phosphoenolpyruvate: step 6/7. In terms of biological role, the AROM polypeptide catalyzes 5 consecutive enzymatic reactions in prechorismate polyaromatic amino acid biosynthesis. The polypeptide is Pentafunctional AROM polypeptide (Yarrowia lipolytica (strain CLIB 122 / E 150) (Yeast)).